The chain runs to 365 residues: MKKQRIVIKIGSSSLTNSKGSIDEEKINDHVRAIAALKKEGHEVIFISSGAVAAGFLQLGYPARPVTLKGKQAAAAVGQSLLMQTYIEHFADHDIKPAQILLTRNDFAKRERYRNAYATVMELIERGLVPIINENDSVSVEELTFGDNDMLSALVSGLIHADKLIILTDINGLYDSNPAEHPDARRFDYIPEITDELLGCAASAGSKVGTGGMKSKLLAAKTALSLGVNVFIGAGEGDDKLIQILKGNGDGTYIGQSDLSSVNNHRQWIAFHSPVSGKITVDEGAELAITENGGSLLPAGVTAISGDFPKGAVVEVYGPNGLAGKGQTLYSAAELEEVKGKRSDEFHHEEGIEVIHRNDWVSIKE.

Lysine 9 contacts ATP. Positions 49, 136, and 148 each coordinate substrate. Residues 168–169 (TD) and 210–216 (TGGMKSK) contribute to the ATP site. The PUA domain maps to 276–353 (SGKITVDEGA…DEFHHEEGIE (78 aa)).

This sequence belongs to the glutamate 5-kinase family.

It localises to the cytoplasm. It catalyses the reaction L-glutamate + ATP = L-glutamyl 5-phosphate + ADP. It participates in amino-acid biosynthesis; L-proline biosynthesis; L-glutamate 5-semialdehyde from L-glutamate: step 1/2. Its function is as follows. Catalyzes the transfer of a phosphate group to glutamate to form L-glutamate 5-phosphate. This is Glutamate 5-kinase 1 from Bacillus licheniformis (strain ATCC 14580 / DSM 13 / JCM 2505 / CCUG 7422 / NBRC 12200 / NCIMB 9375 / NCTC 10341 / NRRL NRS-1264 / Gibson 46).